The chain runs to 222 residues: GTP cyclohydrolase 1 (222 aa).

Cys111, His114, and Cys182 together coordinate Zn(2+).

It belongs to the GTP cyclohydrolase I family. In terms of assembly, homomer.

It carries out the reaction GTP + H2O = 7,8-dihydroneopterin 3'-triphosphate + formate + H(+). It participates in cofactor biosynthesis; 7,8-dihydroneopterin triphosphate biosynthesis; 7,8-dihydroneopterin triphosphate from GTP: step 1/1. The polypeptide is GTP cyclohydrolase 1 (Shigella boydii serotype 18 (strain CDC 3083-94 / BS512)).